Reading from the N-terminus, the 413-residue chain is Aspartate kinase (413 aa).

ACT domains are found at residues 267–341 (LTIR…GDTK) and 347–413 (IVGV…RQGE).

This sequence belongs to the aspartokinase family. In terms of assembly, homotrimer. In the presence of inhibitory amino acids the Stokes radius of the protein increases, suggesting its oligomeric state may change.

It is found in the cytoplasm. It carries out the reaction L-aspartate + ATP = 4-phospho-L-aspartate + ADP. It functions in the pathway amino-acid biosynthesis; L-lysine biosynthesis via DAP pathway; (S)-tetrahydrodipicolinate from L-aspartate: step 1/4. Its pathway is amino-acid biosynthesis; L-methionine biosynthesis via de novo pathway; L-homoserine from L-aspartate: step 1/3. It participates in amino-acid biosynthesis; L-threonine biosynthesis; L-threonine from L-aspartate: step 1/5. Its activity is regulated as follows. Activated by L-lysine, L-methionine, and L-isoleucine. L-threonine, at low concentrations, is a mild activator and has a weak inhibitory effect only at concentrations over 10 mM. Strongly feedback inhibited by the concerted combination of L-lysine and L-threonine and slightly feedback inhibited by the concerted combination of L-threonine and L-methionine. Activated by the combination of L-methionine and L-lysine, L-methionine and L-isoleucine and L-lysine and L-isoleucine. In terms of biological role, involved in the biosynthesis of L-aspartate-beta-semialdehyde which is a central intermediate in the biosynthesis of different amino acids (L-lysine, L-methionine, L-threonine). Catalyzes the phosphorylation of the beta-carboxyl group of L-aspartate to yield 4-phospho-L-aspartate. The polypeptide is Aspartate kinase (Pseudomonas fluorescens (strain SBW25)).